The following is a 113-amino-acid chain: UPF0342 protein SPy_0811/M5005_Spy0626 (113 aa).

Belongs to the UPF0342 family.

In Streptococcus pyogenes serotype M1, this protein is UPF0342 protein SPy_0811/M5005_Spy0626.